Here is a 520-residue protein sequence, read N- to C-terminus: Calcium-dependent protein kinase 25 (520 aa).

Glycine 2 is lipidated: N-myristoyl glycine. Residues 31-87 (PLKPQLQDKPPQPMLMNKDDDKTKLNDTHGDPKLLEGKEKPAQKQTSQGQGGRKCSD) form a disordered region. The segment covering 47 to 72 (NKDDDKTKLNDTHGDPKLLEGKEKPA) has biased composition (basic and acidic residues). The 259-residue stretch at 132–390 (YNLGSKLGHG…AQQVLCHPWI (259 aa)) folds into the Protein kinase domain. ATP-binding positions include 138-146 (LGHGQFGTT) and lysine 161. Aspartate 256 acts as the Proton acceptor in catalysis. Phosphoserine is present on serine 296. The segment at 396–426 (APDTPLDTTVLSRLKKFSATDKLKKMALRVI) is autoinhibitory domain. The region spanning 433–468 (EEIHELRETFKTIDSGKSGRVTYKELKNGLERFNTN) is the EF-hand 1 domain. Ca(2+)-binding residues include aspartate 446, serine 450, arginine 452, glutamate 457, aspartate 483, glutamate 487, threonine 489, and glutamate 494. Positions 469-505 (LDNSDINSLMQIPTDVHLEDTVDYNEFIEAIVRLRQI) constitute an EF-hand 2; degenerate domain.

This sequence belongs to the protein kinase superfamily. Ser/Thr protein kinase family. CDPK subfamily.

The protein resides in the membrane. The catalysed reaction is L-seryl-[protein] + ATP = O-phospho-L-seryl-[protein] + ADP + H(+). The enzyme catalyses L-threonyl-[protein] + ATP = O-phospho-L-threonyl-[protein] + ADP + H(+). With respect to regulation, activated by calcium. Autophosphorylation may play an important role in the regulation of the kinase activity. Functionally, may play a role in signal transduction pathways that involve calcium as a second messenger. This is Calcium-dependent protein kinase 25 (CPK25) from Arabidopsis thaliana (Mouse-ear cress).